The following is a 292-amino-acid chain: Probable serine/threonine-protein kinase FPV226 (292 aa).

The Protein kinase domain maps to tryptophan 14 to leucine 292. ATP contacts are provided by residues isoleucine 20–valine 28 and lysine 43. The active-site Proton acceptor is aspartate 147.

Belongs to the protein kinase superfamily. Ser/Thr protein kinase family. Poxviruses subfamily.

It catalyses the reaction L-seryl-[protein] + ATP = O-phospho-L-seryl-[protein] + ADP + H(+). The catalysed reaction is L-threonyl-[protein] + ATP = O-phospho-L-threonyl-[protein] + ADP + H(+). In Vertebrata (FPV), this protein is Probable serine/threonine-protein kinase FPV226.